Consider the following 353-residue polypeptide: Ribosome biogenesis protein BRX1 homolog (353 aa).

Positions 1 to 10 (MAATKRKRRG) are enriched in basic residues. The interval 1–46 (MAATKRKRRGGFAVQAKKPKRNEKDAEPPAKRHATAEEVEEEERDR) is disordered. Residues 22-36 (NEKDAEPPAKRHATA) show a composition bias toward basic and acidic residues. A Brix domain is found at 60-249 (ERILIFSSRG…LIKIFQGSFG (190 aa)). A Glycyl lysine isopeptide (Lys-Gly) (interchain with G-Cter in SUMO2) cross-link involves residue Lys-160. A Phosphoserine modification is found at Ser-261. N6-acetyllysine is present on Lys-276. Residues Lys-314 and Lys-322 each participate in a glycyl lysine isopeptide (Lys-Gly) (interchain with G-Cter in SUMO2) cross-link.

This sequence belongs to the BRX1 family.

The protein localises to the nucleus. Its subcellular location is the nucleolus. Required for biogenesis of the 60S ribosomal subunit. This chain is Ribosome biogenesis protein BRX1 homolog (BRIX1), found in Pongo abelii (Sumatran orangutan).